Consider the following 668-residue polypeptide: Golgin candidate 2 (668 aa).

A disordered region spans residues 22 to 317 (QAADSLRKDE…RQREERRRRR (296 aa)). Basic and acidic residues predominate over residues 26–39 (SLRKDEKSETHDEV). Composition is skewed to polar residues over residues 64–86 (GSDS…LSSS) and 100–113 (SAPS…NTKL). Composition is skewed to low complexity over residues 123–141 (STPN…GGTS) and 168–178 (SSSSNVVNSRG). Composition is skewed to basic and acidic residues over residues 184 to 207 (TNKE…RNAP), 215 to 237 (THKE…RRSA), and 250 to 259 (GKRDGRESRR). The segment covering 290 to 302 (DESESDYESDSST) has biased composition (acidic residues). Positions 303–312 (DSERERQREE) are enriched in basic and acidic residues. Residues 331 to 539 (AVIKERENMV…SQVEALSSEK (209 aa)) are a coiled coil. A run of 2 helical transmembrane segments spans residues 594 to 614 (KHLG…TVFL) and 622 to 642 (IWAV…LLSH).

It localises to the golgi apparatus membrane. Its function is as follows. Golgi matrix protein playing a role in tethering of vesicles to Golgi membranes and in maintaining the overall structure of the Golgi apparatus. The chain is Golgin candidate 2 (GC2) from Arabidopsis thaliana (Mouse-ear cress).